An 88-amino-acid chain; its full sequence is DNA-directed RNA polymerase subunit omega (88 aa).

The protein belongs to the RNA polymerase subunit omega family. As to quaternary structure, the RNAP catalytic core consists of 2 alpha, 1 beta, 1 beta' and 1 omega subunit. When a sigma factor is associated with the core the holoenzyme is formed, which can initiate transcription.

It catalyses the reaction RNA(n) + a ribonucleoside 5'-triphosphate = RNA(n+1) + diphosphate. Its function is as follows. Promotes RNA polymerase assembly. Latches the N- and C-terminal regions of the beta' subunit thereby facilitating its interaction with the beta and alpha subunits. The protein is DNA-directed RNA polymerase subunit omega of Haemophilus influenzae (strain 86-028NP).